A 303-amino-acid polypeptide reads, in one-letter code: Thyrotroph embryonic factor (303 aa).

2 disordered regions span residues 1 to 63 and 132 to 176; these read MSDA…KLEE and ESAS…DPNC. The residue at position 32 (Ser32) is a Phosphoserine. A compositionally biased stretch (basic and acidic residues) spans 41-61; the sequence is KLMENPPREARLDKEKGKEKL. Residues 133-160 show a composition bias toward low complexity; it reads SASSSTASPPSSSTAIFQPSETVSSTES. Positions 233-296 constitute a bZIP domain; the sequence is DEKYWTRRKK…GKCKTIVSKY (64 aa). Positions 235–255 are basic motif; sequence KYWTRRKKNNVAAKRSRDARR. The interval 256-263 is leucine-zipper; that stretch reads LKENQITI.

This sequence belongs to the bZIP family. PAR subfamily. In terms of assembly, binds DNA as a homodimer or a heterodimer. Can form a heterodimer with DBP.

The protein resides in the nucleus. Functionally, transcription factor that binds to and transactivates the TSHB promoter. Binds to a minimal DNA-binding sequence 5'-[TC][AG][AG]TTA[TC][AG]-3'. The protein is Thyrotroph embryonic factor (TEF) of Homo sapiens (Human).